A 795-amino-acid chain; its full sequence is Glutamine--tRNA ligase, cytoplasmic (795 aa).

The tract at residues 188 to 220 (ADNEKPTKKKEKKEKPAKVEEKKAVVETTAEPS) is disordered. The segment covering 200–212 (KEKPAKVEEKKAV) has biased composition (basic and acidic residues). The 'HIGH' region signature appears at 277–287 (PEPNGYLHIGH). Residues 278–280 (EPN) and 284–290 (HIGHAKA) contribute to the ATP site. L-glutamine is bound by residues D310 and Y450. ATP-binding positions include T469, 498–499 (RL), and 506–508 (MSK). Residues 505–509 (VMSKR) carry the 'KMSKS' region motif.

The protein belongs to the class-I aminoacyl-tRNA synthetase family.

The protein resides in the cytoplasm. It is found in the cytosol. The catalysed reaction is tRNA(Gln) + L-glutamine + ATP = L-glutaminyl-tRNA(Gln) + AMP + diphosphate. The sequence is that of Glutamine--tRNA ligase, cytoplasmic from Arabidopsis thaliana (Mouse-ear cress).